A 374-amino-acid polypeptide reads, in one-letter code: tRNA-specific 2-thiouridylase MnmA (374 aa).

ATP contacts are provided by residues 15–22 (GMSGGVDS) and Met-41. An interaction with target base in tRNA region spans residues 101-103 (NPD). The Nucleophile role is filled by Cys-106. The cysteines at positions 106 and 203 are disulfide-linked. Gly-130 contributes to the ATP binding site. The interval 153-155 (KDQ) is interaction with tRNA. Cys-203 (cysteine persulfide intermediate) is an active-site residue. The tract at residues 311 to 312 (RY) is interaction with tRNA.

It belongs to the MnmA/TRMU family.

Its subcellular location is the cytoplasm. The catalysed reaction is S-sulfanyl-L-cysteinyl-[protein] + uridine(34) in tRNA + AH2 + ATP = 2-thiouridine(34) in tRNA + L-cysteinyl-[protein] + A + AMP + diphosphate + H(+). Catalyzes the 2-thiolation of uridine at the wobble position (U34) of tRNA, leading to the formation of s(2)U34. The polypeptide is tRNA-specific 2-thiouridylase MnmA (Lysinibacillus sphaericus (strain C3-41)).